Reading from the N-terminus, the 162-residue chain is ATP synthase subunit delta, mitochondrial (162 aa).

A mitochondrion-targeting transit peptide spans 1–25; it reads MSSLRLLASAARRATTHVAYTRRGY.

Belongs to the ATPase epsilon chain family. F-type ATPases have 2 components, CF(1) - the catalytic core - and CF(0) - the membrane proton channel. CF(1) has five subunits: alpha(3), beta(3), gamma(1), delta(1), epsilon(1). CF(0) has three main subunits: a, b and c.

Its subcellular location is the mitochondrion. The protein localises to the mitochondrion inner membrane. Its function is as follows. Mitochondrial membrane ATP synthase (F(1)F(0) ATP synthase or Complex V) produces ATP from ADP in the presence of a proton gradient across the membrane which is generated by electron transport complexes of the respiratory chain. F-type ATPases consist of two structural domains, F(1) - containing the extramembraneous catalytic core, and F(0) - containing the membrane proton channel, linked together by a central stalk and a peripheral stalk. During catalysis, ATP turnover in the catalytic domain of F(1) is coupled via a rotary mechanism of the central stalk subunits to proton translocation. Part of the complex F(1) domain and of the central stalk which is part of the complex rotary element. Rotation of the central stalk against the surrounding alpha(3)beta(3) subunits leads to hydrolysis of ATP in three separate catalytic sites on the beta subunits. The chain is ATP synthase subunit delta, mitochondrial (atpD) from Agaricus bisporus (White button mushroom).